Here is a 94-residue protein sequence, read N- to C-terminus: Co-chaperonin GroES (94 aa).

Belongs to the GroES chaperonin family. Heptamer of 7 subunits arranged in a ring. Interacts with the chaperonin GroEL.

It localises to the cytoplasm. Functionally, together with the chaperonin GroEL, plays an essential role in assisting protein folding. The GroEL-GroES system forms a nano-cage that allows encapsulation of the non-native substrate proteins and provides a physical environment optimized to promote and accelerate protein folding. GroES binds to the apical surface of the GroEL ring, thereby capping the opening of the GroEL channel. The protein is Co-chaperonin GroES of Clostridium perfringens (strain ATCC 13124 / DSM 756 / JCM 1290 / NCIMB 6125 / NCTC 8237 / Type A).